A 151-amino-acid chain; its full sequence is UPF0178 protein Spea_2958 (151 aa).

The protein belongs to the UPF0178 family.

This chain is UPF0178 protein Spea_2958, found in Shewanella pealeana (strain ATCC 700345 / ANG-SQ1).